The primary structure comprises 363 residues: Lactose transport ATP-binding protein LacK (363 aa).

The ABC transporter domain occupies 4 to 234 (VRLTDIRKSY…PDNMFVAGFI (231 aa)). ATP is bound at residue 36-43 (GPSGCGKS).

Belongs to the ABC transporter superfamily.

The protein localises to the cell inner membrane. Functionally, part of the binding-protein-dependent transport system for lactose. Probably responsible for energy coupling to the transport system. The chain is Lactose transport ATP-binding protein LacK (lacK) from Rhizobium radiobacter (Agrobacterium tumefaciens).